We begin with the raw amino-acid sequence, 198 residues long: tRNA(Phe) 7-((3-amino-3-carboxypropyl)-4-demethylwyosine(37)-N(4))-methyltransferase 1 (198 aa).

It belongs to the TYW3 family.

The enzyme catalyses 4-demethyl-7-[(3S)-3-amino-3-carboxypropyl]wyosine(37) in tRNA(Phe) + S-adenosyl-L-methionine = 7-[(3S)-3-amino-3-carboxypropyl]wyosine(37) in tRNA(Phe) + S-adenosyl-L-homocysteine + H(+). In terms of biological role, S-adenosyl-L-methionine-dependent methyltransferase that acts as a component of the wyosine derivatives biosynthesis pathway. Probably methylates N-4 position of wybutosine-86 to produce wybutosine-72. In Thermococcus kodakarensis (strain ATCC BAA-918 / JCM 12380 / KOD1) (Pyrococcus kodakaraensis (strain KOD1)), this protein is tRNA(Phe) 7-((3-amino-3-carboxypropyl)-4-demethylwyosine(37)-N(4))-methyltransferase 1.